The primary structure comprises 358 residues: Membrane-bound lytic murein transglycosylase C (358 aa).

Positions 1-16 (MKKILALLVIAPLLVS) are cleaved as a signal peptide. Residue C17 is the site of N-palmitoyl cysteine attachment. C17 carries S-diacylglycerol cysteine lipidation.

The protein belongs to the transglycosylase Slt family.

It is found in the cell outer membrane. It carries out the reaction Exolytic cleavage of the (1-&gt;4)-beta-glycosidic linkage between N-acetylmuramic acid (MurNAc) and N-acetylglucosamine (GlcNAc) residues in peptidoglycan, from either the reducing or the non-reducing ends of the peptidoglycan chains, with concomitant formation of a 1,6-anhydrobond in the MurNAc residue.. In terms of biological role, murein-degrading enzyme. May play a role in recycling of muropeptides during cell elongation and/or cell division. The polypeptide is Membrane-bound lytic murein transglycosylase C (Yersinia pseudotuberculosis serotype O:1b (strain IP 31758)).